The primary structure comprises 84 residues: Transcriptional regulator WhiB1 (84 aa).

The 4Fe-4S Wbl-type domain maps to 8 to 70; the sequence is VCRDEDPELF…GGMSEDERRA (63 aa). 4 residues coordinate [4Fe-4S] cluster: Cys-9, Cys-37, Cys-40, and Cys-46.

Belongs to the WhiB family. Homodimer. Requires [4Fe-4S] cluster as cofactor. Post-translationally, the Fe-S cluster can be nitrosylated by nitric oxide (NO). In terms of processing, upon Fe-S cluster removal intramolecular disulfide bonds are formed.

Its subcellular location is the cytoplasm. Its function is as follows. Acts as a transcriptional regulator. Probably redox-responsive. The apo- but not holo-form probably binds DNA. The protein is Transcriptional regulator WhiB1 (whiB1) of Mycobacterium tuberculosis (strain CDC 1551 / Oshkosh).